We begin with the raw amino-acid sequence, 95 residues long: Protein TusB (95 aa).

The protein belongs to the DsrH/TusB family. Heterohexamer, formed by a dimer of trimers. The hexameric TusBCD complex contains 2 copies each of TusB, TusC and TusD. The TusBCD complex interacts with TusE.

The protein localises to the cytoplasm. Its function is as follows. Part of a sulfur-relay system required for 2-thiolation of 5-methylaminomethyl-2-thiouridine (mnm(5)s(2)U) at tRNA wobble positions. The protein is Protein TusB of Buchnera aphidicola subsp. Schizaphis graminum (strain Sg).